The sequence spans 214 residues: MPDFKIVISDPQSVEPKRIKVKVKANDQIKSIAGEKEGKAVPQAKVNEKTKQLLNIDTLITLEITKQEGDKKVKVKSHFKVEVDNNVPDNEVWISKTMAEKFGAEDFEAIAYRTKTLQISIDQDKATNLVGLKIGDTFEANQLIGLPVKLKITGGSDNSGFPMRFDVTGAAKRKILLSGPPGFYPNEDGERRRKTIRGNTISQEIVQINTIIVR.

This sequence belongs to the eukaryotic ribosomal protein eS6 family.

The sequence is that of Small ribosomal subunit protein eS6 from Saccharolobus islandicus (strain L.S.2.15 / Lassen #1) (Sulfolobus islandicus).